The primary structure comprises 72 residues: Cytochrome c oxidase subunit 2 (72 aa).

The Mitochondrial intermembrane segment spans residues 1–14; that stretch reads MAHPSQLGFQDAAS. Residues 15-45 traverse the membrane as a helical segment; that stretch reads PVMEELLHFHDHALMIVFLISTLVLYIIVAM. At 46 to 72 the chain is on the mitochondrial matrix side; sequence VSTKLTNKHILDSQEVEIVWTILPAVI.

The protein belongs to the cytochrome c oxidase subunit 2 family. In terms of assembly, component of the cytochrome c oxidase (complex IV, CIV), a multisubunit enzyme composed of 14 subunits. The complex is composed of a catalytic core of 3 subunits MT-CO1, MT-CO2 and MT-CO3, encoded in the mitochondrial DNA, and 11 supernumerary subunits COX4I, COX5A, COX5B, COX6A, COX6B, COX6C, COX7A, COX7B, COX7C, COX8 and NDUFA4, which are encoded in the nuclear genome. The complex exists as a monomer or a dimer and forms supercomplexes (SCs) in the inner mitochondrial membrane with NADH-ubiquinone oxidoreductase (complex I, CI) and ubiquinol-cytochrome c oxidoreductase (cytochrome b-c1 complex, complex III, CIII), resulting in different assemblies (supercomplex SCI(1)III(2)IV(1) and megacomplex MCI(2)III(2)IV(2)). Found in a complex with TMEM177, COA6, COX18, COX20, SCO1 and SCO2. Interacts with TMEM177 in a COX20-dependent manner. Interacts with COX20. Interacts with COX16. It depends on Cu cation as a cofactor.

It localises to the mitochondrion inner membrane. It catalyses the reaction 4 Fe(II)-[cytochrome c] + O2 + 8 H(+)(in) = 4 Fe(III)-[cytochrome c] + 2 H2O + 4 H(+)(out). In terms of biological role, component of the cytochrome c oxidase, the last enzyme in the mitochondrial electron transport chain which drives oxidative phosphorylation. The respiratory chain contains 3 multisubunit complexes succinate dehydrogenase (complex II, CII), ubiquinol-cytochrome c oxidoreductase (cytochrome b-c1 complex, complex III, CIII) and cytochrome c oxidase (complex IV, CIV), that cooperate to transfer electrons derived from NADH and succinate to molecular oxygen, creating an electrochemical gradient over the inner membrane that drives transmembrane transport and the ATP synthase. Cytochrome c oxidase is the component of the respiratory chain that catalyzes the reduction of oxygen to water. Electrons originating from reduced cytochrome c in the intermembrane space (IMS) are transferred via the dinuclear copper A center (CU(A)) of subunit 2 and heme A of subunit 1 to the active site in subunit 1, a binuclear center (BNC) formed by heme A3 and copper B (CU(B)). The BNC reduces molecular oxygen to 2 water molecules using 4 electrons from cytochrome c in the IMS and 4 protons from the mitochondrial matrix. The chain is Cytochrome c oxidase subunit 2 (mt-co2) from Atractosteus spatula (Alligator gar).